Consider the following 294-residue polypeptide: MSEKLDSYKLMQEHQTWTSKPASLEEWQIVNEWAIAEKWDLGLGDTERFFNIDEEGFYLGYVNDEPVASVSVVNYTDEYAYAGFYLVAPGARGKGYGLRLSYDAFRHCDKRSVGLDGMPEQEENYKKGGFVTHYETSRLVGIHNQQVDAPDGVQNITADNIDEVIKFDEKITGYPRAALLKDWFSGEGRHGFVINSGDGVIGVVGIRRSTDGYRLGPLYSENQAVCDKLFAMALAQVPQGTQVTIDAPTLDLGFINGLKKMGFEEIFHTFRMYRGKEPQGEKHKIQAIASLELG.

The N-acetyltransferase domain maps to 17–146 (WTSKPASLEE…SRLVGIHNQQ (130 aa)).

The catalysed reaction is marinoloyl-CoA C + holothin = thiomarinol C + CoA. The enzyme catalyses pseudomonoyl-CoA C + holothin = pseudomonic acid C--holothin + CoA. The protein operates within antibiotic biosynthesis. In terms of biological role, acyltransferase that catalyzes the formation of pseudomonic acid C-holothin (PAC-holothin), a thiomarinol analog, from pseudomonoyl-CoA C (PAC-CoA) and holothin. Accepts linear CoA substrates of different lengths, including propionyl-, hexanoyl-, octanoyl-, oleoyl- and dodecanoyl-CoA, readily converting all into the corresponding acyl-holothin adducts. In vivo, is probably involved in the biosynthesis of thiomarinol, a naturally occurring double-headed antibiotic. The sequence is that of Holothin acyltransferase from Pseudoalteromonas sp. (strain SANK 73390).